A 581-amino-acid chain; its full sequence is Sabinene synthase 1, chloroplastic (581 aa).

Residues 1–28 (MPLNSLHNLERKPSKAWSTSCTAPAARL) constitute a chloroplast transit peptide. (2E)-geranyl diphosphate contacts are provided by Arg-297, Asp-334, Asp-338, Arg-475, and Asp-478. Positions 334 and 338 each coordinate Mg(2+). The DDXXD motif signature appears at 334-338 (DDVYD). Residues Asp-478, Thr-482, and Glu-486 each contribute to the Mg(2+) site.

It belongs to the terpene synthase family. Tpsb subfamily. Requires Mg(2+) as cofactor. It depends on Mn(2+) as a cofactor.

Its subcellular location is the plastid. It is found in the chloroplast. The catalysed reaction is (2E)-geranyl diphosphate = sabinene + diphosphate. It catalyses the reaction (2E)-geranyl diphosphate = beta-myrcene + diphosphate. It functions in the pathway secondary metabolite biosynthesis; terpenoid biosynthesis. Its function is as follows. Monoterpene synthase (TPS) involved in the biosynthesis of monoterpene natural products, components of the chemical defense arsenal. Catalyzes the conversion of (2E)-geranyl diphosphate (GPP) into sabinene, and, as minor products, myrcene. This chain is Sabinene synthase 1, chloroplastic, found in Salvia pomifera (Apple sage).